A 74-amino-acid polypeptide reads, in one-letter code: uncharacterized protein (74 aa).

The chain crosses the membrane as a helical span at residues 8 to 30; sequence LAAAVSSSAASAGVSRIAASAMA.

It is found in the mitochondrion outer membrane. This is an uncharacterized protein from Saccharomyces cerevisiae (strain ATCC 204508 / S288c) (Baker's yeast).